Consider the following 830-residue polypeptide: Isethionate sulfite-lyase (830 aa).

The region spanning 31-700 (KRVFKLLERF…VVSATPNGRV (670 aa)) is the PFL domain. Residues Arg189, Gln193, 468–470 (CIE), and Arg678 each bind 2-hydroxyethane-1-sulfonate. Cys468 (cysteine radical intermediate) is an active-site residue. The active-site Proton acceptor is Glu470. Residues 707 to 830 (DGSSPSHGAD…LIARTGHDQM (124 aa)) enclose the Glycine radical domain. A Glycine radical modification is found at Gly805.

Belongs to the glycyl radical enzyme (GRE) family. Homodimer. Requires the activating protein IslB to generate the key active site glycyl radical on Gly-805 that is involved in catalysis.

It catalyses the reaction 2-hydroxyethane-1-sulfonate = acetaldehyde + sulfite + H(+). It functions in the pathway organosulfur degradation; alkanesulfonate degradation. Involved in an anaerobic respiration pathway that converts the sulfonate taurine (2-aminoethanesulfonate) to ammonia, acetate and sulfide. Catalyzes the radical-mediated C-S bond cleavage of isethionate (2-hydroxyethanesulfonate) to form sulfite and acetaldehyde. Is not able to use any alternate organosulfonate or (S)-1,2-propanediol or choline as a substrate, showing that this enzyme is highly specific for isethionate. This Bilophila wadsworthia (strain 3_1_6) protein is Isethionate sulfite-lyase.